The sequence spans 625 residues: Archaeosine synthase subunit alpha (625 aa).

Residues 556-624 (KYVVKIDDFV…VAVDVRHVKK (69 aa)) form the PUA domain.

It belongs to the archaeosine synthase type 1 family. As to quaternary structure, forms a robust complex with the archaeosine synthase beta subunit RaSEA. Formation of this complex highly increases lysine transfer activity. The complex likely consists of an alpha(2)beta(2) heterotetrameric structure.

It catalyses the reaction 7-cyano-7-carbaguanosine(15) in tRNA + L-lysine = 7-N-[(5S)-5-amino-5-carboxypentyl]formamidino-7-deazaguanosine(15) in tRNA. It functions in the pathway tRNA modification; archaeosine-tRNA biosynthesis. Functionally, functions in the biosynthesis of archaeosine, a modified nucleoside present in the dihydrouridine loop (D-loop) of archaeal tRNAs. Catalyzes the addition of L-lysine to the cyano group of 7-cyano-7-deazaguanine (preQ0)-modified tRNAs at position 15, to generate q0kN15-tRNA, a q0N lysine adduct identified as 7-N-[(5S)-5-amino-5-carboxypentyl]formamidino-7-deazaguanosine. In Methanosarcina acetivorans (strain ATCC 35395 / DSM 2834 / JCM 12185 / C2A), this protein is Archaeosine synthase subunit alpha.